We begin with the raw amino-acid sequence, 637 residues long: Biosynthetic arginine decarboxylase (637 aa).

Lys101 bears the N6-(pyridoxal phosphate)lysine mark. Position 286 to 296 (286 to 296 (FDVGGGLAVDY)) interacts with substrate.

The protein belongs to the Orn/Lys/Arg decarboxylase class-II family. SpeA subfamily. Requires Mg(2+) as cofactor. The cofactor is pyridoxal 5'-phosphate.

The catalysed reaction is L-arginine + H(+) = agmatine + CO2. It functions in the pathway amine and polyamine biosynthesis; agmatine biosynthesis; agmatine from L-arginine: step 1/1. Functionally, catalyzes the biosynthesis of agmatine from arginine. This Shewanella loihica (strain ATCC BAA-1088 / PV-4) protein is Biosynthetic arginine decarboxylase.